A 131-amino-acid chain; its full sequence is Small ribosomal subunit protein uS8 (131 aa).

The protein belongs to the universal ribosomal protein uS8 family. As to quaternary structure, part of the 30S ribosomal subunit. Contacts proteins S5 and S12.

Functionally, one of the primary rRNA binding proteins, it binds directly to 16S rRNA central domain where it helps coordinate assembly of the platform of the 30S subunit. This is Small ribosomal subunit protein uS8 from Chlorobium luteolum (strain DSM 273 / BCRC 81028 / 2530) (Pelodictyon luteolum).